Reading from the N-terminus, the 794-residue chain is Protocadherin beta-6 (794 aa).

Positions 1–27 (MMQTKVQNKKRQVAFFILLMLWGEVGS) are cleaved as a signal peptide. The Extracellular portion of the chain corresponds to 28 to 688 (ESIQYSVLEE…AQADSLTVYL (661 aa)). Cadherin domains are found at residues 34-132 (VLEE…APEF), 137-241 (MLLK…VPEF), 246-345 (YEAQ…APEL), 350-449 (FISL…APAF), and 454-559 (YTLF…SPFV). Residue asparagine 46 is glycosylated (N-linked (GlcNAc...) asparagine). Cysteine 95 and cysteine 101 are disulfide-bonded. N-linked (GlcNAc...) asparagine glycosylation is present at asparagine 183. Residue asparagine 416 is glycosylated (N-linked (GlcNAc...) asparagine). N-linked (GlcNAc...) asparagine glycosylation occurs at asparagine 565. The 104-residue stretch at 566-669 (GSAPCTELVP…LVDGFSQPYL (104 aa)) folds into the Cadherin 6 domain. Residues 689–709 (VVALASVSSLFLFSVLLFVAV) form a helical membrane-spanning segment. Residues 710–794 (RLCRRSRAAS…PTSRNSFPFS (85 aa)) lie on the Cytoplasmic side of the membrane. The interval 773 to 794 (PPQGTEREMEETPTSRNSFPFS) is disordered. Residues 784-794 (TPTSRNSFPFS) show a composition bias toward polar residues.

As to quaternary structure, forms homodimers in trans (molecules expressed by two different cells). Forms promiscuous heterodimers in cis (at the plasma membrane of the same cell) with other protocadherins.

It is found in the cell membrane. Its function is as follows. Calcium-dependent cell-adhesion protein involved in cells self-recognition and non-self discrimination. Thereby, it is involved in the establishment and maintenance of specific neuronal connections in the brain. In Homo sapiens (Human), this protein is Protocadherin beta-6.